A 1228-amino-acid chain; its full sequence is Myosin-1 (1228 aa).

The segment at Met-1–Ala-27 is disordered. The Myosin motor domain maps to Val-37–Asp-716. An ATP-binding site is contributed by Gly-130–Thr-137. Ser-358 carries the phosphoserine modification. The interval Thr-405–Ala-487 is actin-binding. IQ domains lie at His-720 to Cys-740 and Ala-741 to Lys-768. Residues Arg-776 to Ala-962 form the TH1 domain. Disordered stretches follow at residues Ser-953–Ala-1040, Gln-1053–Pro-1109, and Gln-1169–Trp-1228. The span at Gln-1053–Gly-1063 shows a compositional bias: polar residues. Residues Gln-1064–Lys-1092 show a composition bias toward low complexity. The segment covering Ala-1093–Pro-1106 has biased composition (pro residues). The SH3 domain maps to Pro-1109–Gly-1170. Residues Pro-1180–Ala-1194 are compositionally biased toward low complexity.

It belongs to the TRAFAC class myosin-kinesin ATPase superfamily. Myosin family. Post-translationally, phosphorylation of the TEDS site (Ser-358) is required for the polarization of the actin cytoskeleton. Phosphorylation probably activates the myosin-I ATPase activity.

The protein resides in the cytoplasm. It is found in the cytoskeleton. Its subcellular location is the actin patch. Its function is as follows. Type-I myosin implicated in the organization of the actin cytoskeleton. Required for proper actin cytoskeleton polarization. At the cell cortex, assembles in patch-like structures together with proteins from the actin-polymerizing machinery and promotes actin assembly. Functions as actin nucleation-promoting factor (NPF) for the Arp2/3 complex. This chain is Myosin-1 (MYO1), found in Yarrowia lipolytica (strain CLIB 122 / E 150) (Yeast).